We begin with the raw amino-acid sequence, 139 residues long: Holo-[acyl-carrier-protein] synthase (139 aa).

2 residues coordinate Mg(2+): Asp-8 and Glu-61.

Belongs to the P-Pant transferase superfamily. AcpS family. Mg(2+) is required as a cofactor.

It is found in the cytoplasm. It catalyses the reaction apo-[ACP] + CoA = holo-[ACP] + adenosine 3',5'-bisphosphate + H(+). In terms of biological role, transfers the 4'-phosphopantetheine moiety from coenzyme A to a Ser of acyl-carrier-protein. The sequence is that of Holo-[acyl-carrier-protein] synthase from Rhodopseudomonas palustris (strain BisA53).